Reading from the N-terminus, the 334-residue chain is Histo-blood group ABO system transferase 2 (334 aa).

At 1–15 the chain is on the cytoplasmic side; that stretch reads MKDLRFGRLKCYSLH. Residues 16–36 form a helical; Signal-anchor for type II membrane protein membrane-spanning segment; that stretch reads LGILPLTVLVLVFFCFVCLSL. Over 37 to 334 the chain is Lumenal; it reads RSQEWGHPGA…VPKNHQAIRN (298 aa). Asparagine 94 is a glycosylation site (N-linked (GlcNAc...) asparagine). UDP-N-acetyl-alpha-D-galactosamine is bound by residues 102-104, tyrosine 107, and 192-194; these read FAV and DVD. The Mn(2+) site is built by aspartate 192 and aspartate 194. 4 residues coordinate an alpha-L-fucosyl-(1-&gt;2)-beta-D-galactosyl derivative: histidine 214, threonine 226, glutamate 284, and aspartate 307. Glutamate 284 functions as the Nucleophile in the catalytic mechanism.

This sequence belongs to the glycosyltransferase 6 family. Requires Mn(2+) as cofactor. In terms of tissue distribution, large intestine, caecum, stomach, pancreas, submaxillary gland and kidney (at protein level). Ubiquitous.

It localises to the golgi apparatus. The protein localises to the golgi stack membrane. Its subcellular location is the secreted. It carries out the reaction an alpha-L-fucosyl-(1-&gt;2)-beta-D-galactosyl derivative + UDP-N-acetyl-alpha-D-galactosamine = an N-acetyl-alpha-D-galactosaminyl-(1-&gt;3)-[alpha-L-fucosyl-(1-&gt;2)]-beta-D-galactosyl derivative + UDP + H(+). It catalyses the reaction an alpha-L-fucosyl-(1-&gt;2)-beta-D-galactosyl derivative + UDP-alpha-D-galactose = an alpha-D-galactosyl-(1-&gt;3)-[alpha-L-fucosyl-(1-&gt;2)]-beta-D-galactosyl derivative + UDP + H(+). It functions in the pathway protein modification; protein glycosylation. Functionally, possesses strong B transferase activity and weak A transferase activity. In Rattus norvegicus (Rat), this protein is Histo-blood group ABO system transferase 2 (Abo2).